The chain runs to 72 residues: Prokaryotic ubiquitin-like protein Pup (72 aa).

The segment covering 1 to 10 (MATRDSGGGQ) has biased composition (gly residues). The segment at 1–41 (MATRDSGGGQQRADRRAEEIDDVATEDTSASDLKERHEKLS) is disordered. Positions 27 to 61 (DTSASDLKERHEKLSEDVDSLLDEIDDVLEENAEE) form a coiled coil. The tract at residues 28 to 66 (TSASDLKERHEKLSEDVDSLLDEIDDVLEENAEEFVKGY) is ARC ATPase binding. Positions 32–41 (DLKERHEKLS) are enriched in basic and acidic residues. Q72 is modified (deamidated glutamine). Residue Q72 forms an Isoglutamyl lysine isopeptide (Gln-Lys) (interchain with K-? in acceptor proteins) linkage.

The protein belongs to the prokaryotic ubiquitin-like protein family. As to quaternary structure, strongly interacts with the proteasome-associated ATPase ARC through a hydrophobic interface; the interacting region of Pup lies in its C-terminal half. There is one Pup binding site per ARC hexamer ring. Is modified by deamidation of its C-terminal glutamine to glutamate by the deamidase Dop, a prerequisite to the subsequent pupylation process.

It functions in the pathway protein degradation; proteasomal Pup-dependent pathway. In terms of biological role, protein modifier that is covalently attached to lysine residues of substrate proteins, thereby targeting them for proteasomal degradation. The tagging system is termed pupylation. The chain is Prokaryotic ubiquitin-like protein Pup from Frankia casuarinae (strain DSM 45818 / CECT 9043 / HFP020203 / CcI3).